A 281-amino-acid chain; its full sequence is 3-methyl-2-oxobutanoate hydroxymethyltransferase (281 aa).

Residues Asp-44 and Asp-83 each contribute to the Mg(2+) site. 3-methyl-2-oxobutanoate-binding positions include 44-45 (DS), Asp-83, and Lys-112. Residue Glu-114 participates in Mg(2+) binding. Residue Glu-180 is the Proton acceptor of the active site. A disordered region spans residues 251 to 281 (RNGTFPGPEHSSRMDPAELAAALGSQDQATE).

Belongs to the PanB family. In terms of assembly, homodecamer; pentamer of dimers. The cofactor is Mg(2+).

Its subcellular location is the cytoplasm. The enzyme catalyses 3-methyl-2-oxobutanoate + (6R)-5,10-methylene-5,6,7,8-tetrahydrofolate + H2O = 2-dehydropantoate + (6S)-5,6,7,8-tetrahydrofolate. The protein operates within cofactor biosynthesis; (R)-pantothenate biosynthesis; (R)-pantoate from 3-methyl-2-oxobutanoate: step 1/2. Catalyzes the reversible reaction in which hydroxymethyl group from 5,10-methylenetetrahydrofolate is transferred onto alpha-ketoisovalerate to form ketopantoate. In Chloroflexus aurantiacus (strain ATCC 29364 / DSM 637 / Y-400-fl), this protein is 3-methyl-2-oxobutanoate hydroxymethyltransferase.